We begin with the raw amino-acid sequence, 98 residues long: NADH-ubiquinone oxidoreductase chain 4L (98 aa).

3 consecutive transmembrane segments (helical) span residues 1 to 21, 27 to 47, and 61 to 81; these read MTPT…GMLT, VASL…ATLI, and IILL…LISI.

Belongs to the complex I subunit 4L family. Core subunit of respiratory chain NADH dehydrogenase (Complex I) which is composed of 45 different subunits.

The protein localises to the mitochondrion inner membrane. The enzyme catalyses a ubiquinone + NADH + 5 H(+)(in) = a ubiquinol + NAD(+) + 4 H(+)(out). Its function is as follows. Core subunit of the mitochondrial membrane respiratory chain NADH dehydrogenase (Complex I) which catalyzes electron transfer from NADH through the respiratory chain, using ubiquinone as an electron acceptor. Part of the enzyme membrane arm which is embedded in the lipid bilayer and involved in proton translocation. The protein is NADH-ubiquinone oxidoreductase chain 4L (MT-ND4L) of Macaca fascicularis (Crab-eating macaque).